Reading from the N-terminus, the 121-residue chain is Flagellar hook-basal body complex protein FliE (121 aa).

This sequence belongs to the FliE family.

The protein localises to the bacterial flagellum basal body. In Saccharophagus degradans (strain 2-40 / ATCC 43961 / DSM 17024), this protein is Flagellar hook-basal body complex protein FliE.